Here is a 372-residue protein sequence, read N- to C-terminus: Saccharopine dehydrogenase [NAD(+), L-lysine-forming] (372 aa).

Residues arginine 18 and lysine 77 each contribute to the L-saccharopine site. Residue lysine 77 is the Proton acceptor of the active site. Histidine 95 (proton donor) is an active-site residue. Glutamine 100 lines the L-saccharopine pocket. NAD(+) is bound at residue arginine 129. Residues arginine 130 and phenylalanine 134 each contribute to the L-saccharopine site. NAD(+) contacts are provided by residues 200-201 (GR), aspartate 224, threonine 228, tyrosine 248, and valine 275. Cysteines 202 and 246 form a disulfide. 276 to 278 (SAD) is an L-saccharopine binding site. NAD(+) is bound at residue 316 to 319 (IDHL).

The protein belongs to the AlaDH/PNT family. As to quaternary structure, monomer.

The enzyme catalyses L-saccharopine + NAD(+) + H2O = L-lysine + 2-oxoglutarate + NADH + H(+). The protein operates within amino-acid biosynthesis; L-lysine biosynthesis via AAA pathway; L-lysine from L-alpha-aminoadipate (fungal route): step 3/3. In terms of biological role, catalyzes the NAD(+)-dependent cleavage of saccharopine to L-lysine and 2-oxoglutarate, the final step in the alpha-aminoadipate (AAA) pathway for lysin biosynthesis. The polypeptide is Saccharopine dehydrogenase [NAD(+), L-lysine-forming] (lys-4) (Neurospora crassa (strain ATCC 24698 / 74-OR23-1A / CBS 708.71 / DSM 1257 / FGSC 987)).